We begin with the raw amino-acid sequence, 447 residues long: Phosphoglucosamine mutase (447 aa).

Serine 101 functions as the Phosphoserine intermediate in the catalytic mechanism. Serine 101, aspartate 242, aspartate 244, and aspartate 246 together coordinate Mg(2+). Position 101 is a phosphoserine (serine 101).

Belongs to the phosphohexose mutase family. Mg(2+) is required as a cofactor. Activated by phosphorylation.

The catalysed reaction is alpha-D-glucosamine 1-phosphate = D-glucosamine 6-phosphate. Catalyzes the conversion of glucosamine-6-phosphate to glucosamine-1-phosphate. This Methylobacterium radiotolerans (strain ATCC 27329 / DSM 1819 / JCM 2831 / NBRC 15690 / NCIMB 10815 / 0-1) protein is Phosphoglucosamine mutase.